Here is a 321-residue protein sequence, read N- to C-terminus: Viral T-cell receptor beta chain-like T17T-22 (321 aa).

Residues 1–28 (MISWLPSVAMGSRLLCCVALCLLGAGPA) form the signal peptide. The tract at residues 29–122 (DSGLTQTPRH…DSALYLCASS (94 aa)) is v segment. N-linked (GlcNAc...) asparagine; by host glycosylation occurs at Asn105. The interval 123 to 128 (PNEDSE) is d segment. The interval 129–144 (YGETLYFGEGSRLTVV) is j segment. A c region region spans residues 145–321 (EDLKKVSPPK…LMAKVKRKDS (177 aa)). N-linked (GlcNAc...) asparagine; by host glycans are attached at residues Asn214 and Asn264.

This is Viral T-cell receptor beta chain-like T17T-22 (V-TCR) from Feline leukemia virus.